The following is a 232-amino-acid chain: Aspartate/glutamate leucyltransferase (232 aa).

This sequence belongs to the R-transferase family. Bpt subfamily.

It is found in the cytoplasm. It catalyses the reaction N-terminal L-glutamyl-[protein] + L-leucyl-tRNA(Leu) = N-terminal L-leucyl-L-glutamyl-[protein] + tRNA(Leu) + H(+). It carries out the reaction N-terminal L-aspartyl-[protein] + L-leucyl-tRNA(Leu) = N-terminal L-leucyl-L-aspartyl-[protein] + tRNA(Leu) + H(+). Functions in the N-end rule pathway of protein degradation where it conjugates Leu from its aminoacyl-tRNA to the N-termini of proteins containing an N-terminal aspartate or glutamate. In Vibrio vulnificus (strain CMCP6), this protein is Aspartate/glutamate leucyltransferase.